The primary structure comprises 396 residues: Stearoyl-[acyl-carrier-protein] 9-desaturase, chloroplastic (396 aa).

A chloroplast-targeting transit peptide spans 1-33; the sequence is MALKLNPFLSQTQKLPSFALPPMASTRSPKFYM. Residues Glu-138, Glu-176, His-179, Glu-229, Glu-262, and His-265 each contribute to the Fe cation site.

Belongs to the fatty acid desaturase type 2 family. Homodimer. Fe(2+) serves as cofactor. In terms of tissue distribution, higher levels in developing seeds than in leaf and root tissues.

Its subcellular location is the plastid. It is found in the chloroplast. It carries out the reaction octadecanoyl-[ACP] + 2 reduced [2Fe-2S]-[ferredoxin] + O2 + 2 H(+) = (9Z)-octadecenoyl-[ACP] + 2 oxidized [2Fe-2S]-[ferredoxin] + 2 H2O. The protein operates within lipid metabolism; fatty acid metabolism. Converts stearoyl-ACP to oleoyl-ACP by introduction of a cis double bond between carbons 9 and 10 of the acyl chain. The polypeptide is Stearoyl-[acyl-carrier-protein] 9-desaturase, chloroplastic (Ricinus communis (Castor bean)).